Here is a 287-residue protein sequence, read N- to C-terminus: Acetyl-coenzyme A carboxylase carboxyl transferase subunit beta (287 aa).

In terms of domain architecture, CoA carboxyltransferase N-terminal spans 36-287 (MWVKCDRCGK…KVLYKILELH (252 aa)). Zn(2+) contacts are provided by Cys-40, Cys-43, Cys-59, and Cys-62. The segment at 40–62 (CDRCGKTLYKKDLDENLKVCKFC) adopts a C4-type zinc-finger fold.

The protein belongs to the AccD/PCCB family. Acetyl-CoA carboxylase is a heterohexamer composed of biotin carboxyl carrier protein (AccB), biotin carboxylase (AccC) and two subunits each of ACCase subunit alpha (AccA) and ACCase subunit beta (AccD). It depends on Zn(2+) as a cofactor.

It is found in the cytoplasm. The enzyme catalyses N(6)-carboxybiotinyl-L-lysyl-[protein] + acetyl-CoA = N(6)-biotinyl-L-lysyl-[protein] + malonyl-CoA. Its pathway is lipid metabolism; malonyl-CoA biosynthesis; malonyl-CoA from acetyl-CoA: step 1/1. Its function is as follows. Component of the acetyl coenzyme A carboxylase (ACC) complex. Biotin carboxylase (BC) catalyzes the carboxylation of biotin on its carrier protein (BCCP) and then the CO(2) group is transferred by the transcarboxylase to acetyl-CoA to form malonyl-CoA. The sequence is that of Acetyl-coenzyme A carboxylase carboxyl transferase subunit beta from Clostridium novyi (strain NT).